The primary structure comprises 147 residues: Heavy metal-associated isoprenylated plant protein 27 (147 aa).

Positions 18 to 82 (FQKVEIKVKM…VMHRTGKKAE (65 aa)) constitute an HMA domain. Residues cysteine 29 and cysteine 32 each contribute to the a metal cation site. The residue at position 144 (cysteine 144) is a Cysteine methyl ester. Residue cysteine 144 is the site of S-farnesyl cysteine attachment. A propeptide spans 145 to 147 (TIM) (removed in mature form).

Belongs to the HIPP family. In terms of assembly, interacts with UBP16. Interacts with ZHD11/HB29.

The protein localises to the membrane. Heavy-metal-binding protein. Binds cadmium. May be involved in cadmium transport and play a role in cadmium detoxification. The polypeptide is Heavy metal-associated isoprenylated plant protein 27 (Arabidopsis thaliana (Mouse-ear cress)).